Reading from the N-terminus, the 282-residue chain is NAD kinase (282 aa).

Catalysis depends on Asp-67, which acts as the Proton acceptor. Residues 67–68 (DG), 140–141 (NE), His-151, Arg-170, Asp-172, and 183–188 (TAYNLS) each bind NAD(+).

This sequence belongs to the NAD kinase family. A divalent metal cation is required as a cofactor.

The protein localises to the cytoplasm. It carries out the reaction NAD(+) + ATP = ADP + NADP(+) + H(+). Functionally, involved in the regulation of the intracellular balance of NAD and NADP, and is a key enzyme in the biosynthesis of NADP. Catalyzes specifically the phosphorylation on 2'-hydroxyl of the adenosine moiety of NAD to yield NADP. The polypeptide is NAD kinase (Halobacterium salinarum (strain ATCC 700922 / JCM 11081 / NRC-1) (Halobacterium halobium)).